Reading from the N-terminus, the 356-residue chain is CMP-sialic acid transporter 2 (356 aa).

Residues 1 to 24 show a composition bias toward basic and acidic residues; it reads MEYRRVKDQESYDVVSQKDIESPG. The tract at residues 1–43 is disordered; the sequence is MEYRRVKDQESYDVVSQKDIESPGERSLSSTSATSSLSTAGAS. At 1 to 52 the chain is on the cytoplasmic side; that stretch reads MEYRRVKDQESYDVVSQKDIESPGERSLSSTSATSSLSTAGASKGNNSWKLK. The segment covering 27 to 43 has biased composition (low complexity); sequence SLSSTSATSSLSTAGAS. The chain crosses the membrane as a helical span at residues 53 to 73; sequence SIVTLALTLLTSSQAILIVWS. Over 74–82 the chain is Lumenal; sequence KRAGKYEYS. A helical transmembrane segment spans residues 83–103; sequence VTTANFSVEALKCLLSLIALY. Topologically, residues 104-125 are cytoplasmic; it reads RTWNSQGVTEDNRLSTSFDEVS. Residues 126-146 traverse the membrane as a helical segment; sequence VYPIPAILYMVKNLLQYYIFA. At 147-149 the chain is on the lumenal side; sequence YVD. The helical transmembrane segment at 150-172 threads the bilayer; that stretch reads APAYQILKNLNIISTGVLYRIIL. Residues 173–175 lie on the Cytoplasmic side of the membrane; sequence KKK. Residues 176–196 traverse the membrane as a helical segment; sequence LSEIQWAAFILLCAGCTTAQL. Residues 197-211 lie on the Lumenal side of the membrane; it reads NPSSDHVLQTPIQGW. Residues 212 to 232 traverse the membrane as a helical segment; sequence VMAIVMALLSGFAGVYTEAII. At 233-239 the chain is on the cytoplasmic side; the sequence is KKRPSRN. The helical transmembrane segment at 240 to 260 threads the bilayer; that stretch reads INVQNFWLYIFGMLFNLVAIC. At 261 to 277 the chain is on the lumenal side; that stretch reads VQDFDAVMNKGFFHGYS. A helical membrane pass occupies residues 278 to 298; sequence FITVLMILNHALSGIAVSMVM. Topologically, residues 299–314 are cytoplasmic; that stretch reads KYADNIVKVYSTSVAM. The chain crosses the membrane as a helical span at residues 315–335; the sequence is LLTAVVSVFLFGFHLSLAFFL. Residues 336-356 lie on the Lumenal side of the membrane; the sequence is GSTVVSVSVYLHSVGKPQPQK.

It belongs to the nucleotide-sugar transporter family. CMP-Sialate:CMP antiporter (TC 2.A.7.12) subfamily.

The protein resides in the golgi apparatus membrane. Its function is as follows. Sugar transporter involved in the transport of CMP-sialic acid from the cytoplasm into the Golgi. May transport important nucleotide sugars such as CMP-Kdo (2-keto-3-deoxy-D-manno-octulosonic acid) in physiological conditions. In Oryza sativa subsp. indica (Rice), this protein is CMP-sialic acid transporter 2.